We begin with the raw amino-acid sequence, 150 residues long: MGIQHEFDIIINGDIALRNLQLHRGDNYGCKLKIISNDYKKLKLRFIIRPDWSEIDEVKGLTVFANNYAVKVNKVDYTFYYVIYEAVIHLYNKKTEILIYSDDENELFKHYYPYISLNMISKKYKVKEENYSSPYIEHPLIPYRDYESMD.

Belongs to the orthopoxvirus OPG027 family.

Functionally, inhibits antiviral activity induced by type I interferons. Does not block signal transduction of IFN, but is important to counteract the host antiviral state induced by a pre-treatment with IFN. The protein is Interferon antagonist OPG027 (OPG027) of Cynomys gunnisoni (Gunnison's prairie dog).